The following is a 313-amino-acid chain: tRNA dimethylallyltransferase (313 aa).

An ATP-binding site is contributed by 8–15; sequence GPTGTGKS. 10-15 is a substrate binding site; sequence TGTGKS.

This sequence belongs to the IPP transferase family. Monomer. Mg(2+) serves as cofactor.

It carries out the reaction adenosine(37) in tRNA + dimethylallyl diphosphate = N(6)-dimethylallyladenosine(37) in tRNA + diphosphate. Catalyzes the transfer of a dimethylallyl group onto the adenine at position 37 in tRNAs that read codons beginning with uridine, leading to the formation of N6-(dimethylallyl)adenosine (i(6)A). The protein is tRNA dimethylallyltransferase of Mycolicibacterium gilvum (strain PYR-GCK) (Mycobacterium gilvum (strain PYR-GCK)).